The sequence spans 131 residues: Global transcriptional regulator Spx (131 aa).

Cysteines 10 and 13 form a disulfide.

The protein belongs to the ArsC family. Spx subfamily. As to quaternary structure, interacts with the C-terminal domain of the alpha subunit of the RNAP.

The protein resides in the cytoplasm. Its function is as follows. Global transcriptional regulator that plays a key role in stress response and exerts either positive or negative regulation of genes. Acts by interacting with the C-terminal domain of the alpha subunit of the RNA polymerase (RNAP). This interaction can enhance binding of RNAP to the promoter region of target genes and stimulate their transcription, or block interaction of RNAP with activator. In Staphylococcus epidermidis (strain ATCC 35984 / DSM 28319 / BCRC 17069 / CCUG 31568 / BM 3577 / RP62A), this protein is Global transcriptional regulator Spx.